A 124-amino-acid polypeptide reads, in one-letter code: Small ribosomal subunit protein uS12 (124 aa).

At aspartate 89 the chain carries 3-methylthioaspartic acid. The disordered stretch occupies residues 105 to 124; the sequence is TGVDSRMQGRSKYGTKKPKK.

Belongs to the universal ribosomal protein uS12 family. In terms of assembly, part of the 30S ribosomal subunit. Contacts proteins S8 and S17. May interact with IF1 in the 30S initiation complex.

Its function is as follows. With S4 and S5 plays an important role in translational accuracy. Functionally, interacts with and stabilizes bases of the 16S rRNA that are involved in tRNA selection in the A site and with the mRNA backbone. Located at the interface of the 30S and 50S subunits, it traverses the body of the 30S subunit contacting proteins on the other side and probably holding the rRNA structure together. The combined cluster of proteins S8, S12 and S17 appears to hold together the shoulder and platform of the 30S subunit. The chain is Small ribosomal subunit protein uS12 from Vesicomyosocius okutanii subsp. Calyptogena okutanii (strain HA).